We begin with the raw amino-acid sequence, 251 residues long: Imidazole glycerol phosphate synthase subunit HisF (251 aa).

Active-site residues include Asp-11 and Asp-130.

Belongs to the HisA/HisF family. Heterodimer of HisH and HisF.

Its subcellular location is the cytoplasm. It catalyses the reaction 5-[(5-phospho-1-deoxy-D-ribulos-1-ylimino)methylamino]-1-(5-phospho-beta-D-ribosyl)imidazole-4-carboxamide + L-glutamine = D-erythro-1-(imidazol-4-yl)glycerol 3-phosphate + 5-amino-1-(5-phospho-beta-D-ribosyl)imidazole-4-carboxamide + L-glutamate + H(+). It participates in amino-acid biosynthesis; L-histidine biosynthesis; L-histidine from 5-phospho-alpha-D-ribose 1-diphosphate: step 5/9. Its function is as follows. IGPS catalyzes the conversion of PRFAR and glutamine to IGP, AICAR and glutamate. The HisF subunit catalyzes the cyclization activity that produces IGP and AICAR from PRFAR using the ammonia provided by the HisH subunit. The polypeptide is Imidazole glycerol phosphate synthase subunit HisF (Pelodictyon phaeoclathratiforme (strain DSM 5477 / BU-1)).